We begin with the raw amino-acid sequence, 461 residues long: L-serine dehydratase (461 aa).

The protein belongs to the iron-sulfur dependent L-serine dehydratase family. [4Fe-4S] cluster serves as cofactor.

The catalysed reaction is L-serine = pyruvate + NH4(+). The protein operates within carbohydrate biosynthesis; gluconeogenesis. The protein is L-serine dehydratase (sdaA) of Mycobacterium bovis (strain ATCC BAA-935 / AF2122/97).